The primary structure comprises 615 residues: Putative binding protein BRA0576/BS1330_II0571 (615 aa).

The signal sequence occupies residues methionine 1 to alanine 29.

Belongs to the bacterial solute-binding protein 5 family.

Its subcellular location is the periplasm. The chain is Putative binding protein BRA0576/BS1330_II0571 from Brucella suis biovar 1 (strain 1330).